The chain runs to 311 residues: Aspartate carbamoyltransferase catalytic subunit (311 aa).

Arg55 and Thr56 together coordinate carbamoyl phosphate. Lys85 serves as a coordination point for L-aspartate. Positions 106, 135, and 138 each coordinate carbamoyl phosphate. L-aspartate-binding residues include Arg168 and Arg230. Carbamoyl phosphate is bound by residues Leu268 and Pro269.

The protein belongs to the aspartate/ornithine carbamoyltransferase superfamily. ATCase family. As to quaternary structure, heterododecamer (2C3:3R2) of six catalytic PyrB chains organized as two trimers (C3), and six regulatory PyrI chains organized as three dimers (R2).

The catalysed reaction is carbamoyl phosphate + L-aspartate = N-carbamoyl-L-aspartate + phosphate + H(+). It functions in the pathway pyrimidine metabolism; UMP biosynthesis via de novo pathway; (S)-dihydroorotate from bicarbonate: step 2/3. Functionally, catalyzes the condensation of carbamoyl phosphate and aspartate to form carbamoyl aspartate and inorganic phosphate, the committed step in the de novo pyrimidine nucleotide biosynthesis pathway. The protein is Aspartate carbamoyltransferase catalytic subunit of Serratia proteamaculans (strain 568).